The following is a 538-amino-acid chain: Coiled-coil domain-containing protein 8 (538 aa).

The tract at residues isoleucine 58–arginine 128 is disordered. Residues glutamine 119 to arginine 128 show a composition bias toward basic residues. A phosphoserine mark is found at serine 142, serine 146, and serine 261. The interval tryptophan 213 to lysine 473 is disordered. A compositionally biased stretch (basic and acidic residues) spans aspartate 301–glutamate 313. The segment covering alanine 321–alanine 332 has biased composition (low complexity). Positions alanine 349–asparagine 366 form a coiled coil. 3 stretches are compositionally biased toward basic and acidic residues: residues aspartate 357–alanine 373, aspartate 381–arginine 392, and aspartate 405–alanine 419. Composition is skewed to low complexity over residues glutamine 428 to alanine 438 and alanine 458 to alanine 469. Positions proline 500–proline 506 match the PxLPxI/L motif; mediates interaction with ANKRA2 motif. A coiled-coil region spans residues glutamate 514–glutamate 535.

Component of the 3M complex, composed of core components CUL7, CCDC8 and OBSL1. Interacts (via PxLPxI/L motif) with ANKRA2 (via ankyrin repeats); may link the 3M complex to histone deacetylases including HDAC4 and HDAC5. In terms of tissue distribution, widely expressed with low levels in spleen, skeletal muscle, small intestine, kidney and liver.

The protein resides in the cytoplasm. The protein localises to the cytoskeleton. It is found in the microtubule organizing center. It localises to the centrosome. In terms of biological role, core component of the 3M complex, a complex required to regulate microtubule dynamics and genome integrity. It is unclear how the 3M complex regulates microtubules, it could act by controlling the level of a microtubule stabilizer. Required for localization of CUL7 to the centrosome. The protein is Coiled-coil domain-containing protein 8 (CCDC8) of Homo sapiens (Human).